A 331-amino-acid polypeptide reads, in one-letter code: Type 2 lactosamine alpha-2,3-sialyltransferase (331 aa).

The Cytoplasmic segment spans residues 1–4; it reads MKGY. The chain crosses the membrane as a helical; Signal-anchor for type II membrane protein span at residues 5–25; that stretch reads VVAIFLSSIFLYYVLYCILWG. The Lumenal portion of the chain corresponds to 26–331; the sequence is TNGYWFPNEE…KKMVINLTQN (306 aa). Residues Asn-129, Asn-181, Asn-295, Asn-308, and Asn-327 are each glycosylated (N-linked (GlcNAc...) asparagine).

This sequence belongs to the glycosyltransferase 29 family.

It localises to the golgi apparatus membrane. The enzyme catalyses a neolactoside nLc4Cer(d18:1(4E)) + CMP-N-acetyl-beta-neuraminate = a neolactoside IV(3)-alpha-NeuAc-nLc4Cer(d18:1(4E)) + CMP + H(+). It carries out the reaction a beta-D-galactosyl-(1-&gt;4)-N-acetyl-beta-D-glucosaminyl derivative + CMP-N-acetyl-beta-neuraminate = an N-acetyl-alpha-neuraminyl-(2-&gt;3)-beta-D-galactosyl-(1-&gt;4)-N-acetyl-beta-D-glucosaminyl derivative + CMP + H(+). The catalysed reaction is a neolactoside nLc6Cer(d18:1(4E)) + CMP-N-acetyl-beta-neuraminate = a neolactoside VI(3)-alpha-NeuNAc-nLc6Cer(d18:1(4E)) + CMP + H(+). Functionally, transfers the sialyl residue from CMP-N-acetyl-beta-neuraminate to the terminal galactose residue on sugar chains of glycoproteins and glycolipids. It's alpha-2,3-sialyltransferase activity is specific toward type II glycan chains (Galbeta1-4GlcNAc) on glycoproteins and glycolipids such as neolactosides nLc4Cer and nLc6Cer, whose sialyl-products serve as precursors for the Lewis X antigen. Critically involved in the synthesis of functional selectin ligands needed for neutrophil recruitment during inflammation and lymphocyte homing to the lymph nodes. This Rattus norvegicus (Rat) protein is Type 2 lactosamine alpha-2,3-sialyltransferase (St3gal6).